Here is a 269-residue protein sequence, read N- to C-terminus: Small ribosomal subunit protein uS2 (269 aa).

The segment at 228 to 269 (ARAERQAAAAKDAAGDTGKSEADAEAVKAEAAAEEKAETTEA) is disordered. A compositionally biased stretch (low complexity) spans 233 to 244 (QAAAAKDAAGDT). Over residues 245–269 (GKSEADAEAVKAEAAAEEKAETTEA) the composition is skewed to basic and acidic residues.

The protein belongs to the universal ribosomal protein uS2 family.

The sequence is that of Small ribosomal subunit protein uS2 from Corynebacterium urealyticum (strain ATCC 43042 / DSM 7109).